Reading from the N-terminus, the 753-residue chain is Bifunctional terpene synthase FUP1 (753 aa).

Residues 1–329 (MGPLLYRSRH…CSACPRQNAW (329 aa)) are terpene cyclase. D96 is a binding site for Mg(2+). The short motif at 96–100 (DDTGE) is the DDXXD 1 element. Positions 231 to 239 (NDYFSWERE) match the NSE/DTE motif. The interval 330-745 (KNDTLSNGQN…MLRLCLAKLS (416 aa)) is prenyltransferase. Isopentenyl diphosphate contacts are provided by K461, R464, and H493. D500 and D504 together coordinate Mg(2+). Positions 500 to 504 (DDLED) match the DDXXD 2 motif. R509 contributes to the dimethylallyl diphosphate binding site. R510 contacts isopentenyl diphosphate. Dimethylallyl diphosphate contacts are provided by K587, T588, Q625, N632, K640, and K650.

The protein in the N-terminal section; belongs to the terpene synthase family. It in the C-terminal section; belongs to the FPP/GGPP synthase family. Hexamer. The cofactor is Mg(2+).

It catalyses the reaction isopentenyl diphosphate + (2E,6E)-farnesyl diphosphate = (2E,6E,10E)-geranylgeranyl diphosphate + diphosphate. The protein operates within secondary metabolite biosynthesis; terpenoid biosynthesis. Functionally, bifunctional terpene synthase; part of the gene cluster that mediates the biosynthesis of the mycotoxin fusaproliferin (FUP) that belongs to the class of bicyclic sesterterpenoids. The FUP biosynthetic pathway starts with the enzyme encoded by FUP1 that combines a C-terminal prenyltransferase domain responsible for the synthesis of geranylgeranyl diphosphate with the N-terminal terpene cyclase domain, to yield preterpestacin I. Preterpestacin I is then decorated by oxygenation steps that are catalyzed by two cytochrome P450 monooxygenases. First, FUP2 introduces a hydroxyl group at the C-24 position resulting in the formation of preterpestacin IIa, which can be further oxidized. The second P450 monooxygenase catalyzes the hydroxylation at C-16 and C-17 of preterpestacin IIa, producing preterpestacin III. Subsequently, the FAD-dependent oxidoreductase FUP4 catalyzes the oxidation of the hydroxy group at the C-16 position to a keto group, leading to the formation of (-)-terpestacin, which is the immediate precursor of FUP. The final step in the proposed biosynthetic pathway is the addition of an acetyl group at the C-24 position of terpestacin, which is catalyzed by the acetyltransferase FUP5. The chain is Bifunctional terpene synthase FUP1 from Fusarium proliferatum (strain ET1) (Orchid endophyte fungus).